A 198-amino-acid polypeptide reads, in one-letter code: NADH-quinone oxidoreductase subunit B (198 aa).

Residues Cys-62, Cys-63, Cys-128, and Cys-158 each coordinate [4Fe-4S] cluster.

Belongs to the complex I 20 kDa subunit family. As to quaternary structure, NDH-1 is composed of 14 different subunits. Subunits NuoB, C, D, E, F, and G constitute the peripheral sector of the complex. It depends on [4Fe-4S] cluster as a cofactor.

It localises to the cell inner membrane. The catalysed reaction is a quinone + NADH + 5 H(+)(in) = a quinol + NAD(+) + 4 H(+)(out). NDH-1 shuttles electrons from NADH, via FMN and iron-sulfur (Fe-S) centers, to quinones in the respiratory chain. The immediate electron acceptor for the enzyme in this species is believed to be a menaquinone. Couples the redox reaction to proton translocation (for every two electrons transferred, four hydrogen ions are translocated across the cytoplasmic membrane), and thus conserves the redox energy in a proton gradient. This chain is NADH-quinone oxidoreductase subunit B, found in Phocaeicola vulgatus (strain ATCC 8482 / DSM 1447 / JCM 5826 / CCUG 4940 / NBRC 14291 / NCTC 11154) (Bacteroides vulgatus).